The following is an 83-amino-acid chain: Small ribosomal subunit protein uS17 (83 aa).

The protein belongs to the universal ribosomal protein uS17 family. Part of the 30S ribosomal subunit.

Its function is as follows. One of the primary rRNA binding proteins, it binds specifically to the 5'-end of 16S ribosomal RNA. The chain is Small ribosomal subunit protein uS17 from Zymomonas mobilis subsp. mobilis (strain ATCC 31821 / ZM4 / CP4).